A 121-amino-acid polypeptide reads, in one-letter code: Alpha-endosulfine (121 aa).

The interval 1–53 (MSQKQEEENPAEETGEEKQDTQEKEGILPERAEEAKLKAKYPSLGQKPGGSDF) is disordered. Ser-2 is subject to N-acetylserine. Ser-2 is subject to Phosphoserine. Residues 16–37 (EEKQDTQEKEGILPERAEEAKL) are compositionally biased toward basic and acidic residues. Thr-21 is subject to Phosphothreonine. Residue Ser-43 is modified to Phosphoserine. Residue Ser-67 is modified to Phosphoserine; by GWL. The segment at 79–121 (NKQLPSAGPDKNLVTGDHIPTPQDLPQRKSSLVTSKLAGGQVE) is disordered. Ser-109 is subject to Phosphoserine; by PKA.

Belongs to the endosulfine family. Interacts (when phosphorylated at Ser-67) with PPP2R2D. Interacts with ABCC8. Interacts with SNCA; interaction is disrupted when phosphorylated at Ser-109. Phosphorylation at Ser-67 by GWL during mitosis is essential for interaction with PPP2R2D (PR55-delta) and subsequent inactivation of PP2A. Phosphorylated by PKA. As to expression, widely expressed with high levels in skeletal muscle and brain and lower levels in the pancreas.

The protein resides in the cytoplasm. In terms of biological role, protein phosphatase inhibitor that specifically inhibits protein phosphatase 2A (PP2A) during mitosis. When phosphorylated at Ser-67 during mitosis, specifically interacts with PPP2R2D (PR55-delta) and inhibits its activity, leading to inactivation of PP2A, an essential condition to keep cyclin-B1-CDK1 activity high during M phase. Also acts as a stimulator of insulin secretion by interacting with sulfonylurea receptor (ABCC8), thereby preventing sulfonylurea from binding to its receptor and reducing K(ATP) channel currents. The protein is Alpha-endosulfine (ENSA) of Homo sapiens (Human).